The sequence spans 194 residues: Holliday junction branch migration complex subunit RuvA (194 aa).

Positions 1-64 (MIGRLRGVLT…DDSAALYGFL (64 aa)) are domain I. Residues 65–140 (SESERRLFRH…RAADFNNGIS (76 aa)) are domain II. Positions 140-144 (STSGK) are flexible linker. Residues 145–194 (LNLDTVSEAALALQQLGYKPAEAARMARDAGTESDDVAIVIKKALQTVLR) form a domain III region.

This sequence belongs to the RuvA family. As to quaternary structure, homotetramer. Forms an RuvA(8)-RuvB(12)-Holliday junction (HJ) complex. HJ DNA is sandwiched between 2 RuvA tetramers; dsDNA enters through RuvA and exits via RuvB. An RuvB hexamer assembles on each DNA strand where it exits the tetramer. Each RuvB hexamer is contacted by two RuvA subunits (via domain III) on 2 adjacent RuvB subunits; this complex drives branch migration. In the full resolvosome a probable DNA-RuvA(4)-RuvB(12)-RuvC(2) complex forms which resolves the HJ.

It is found in the cytoplasm. Its function is as follows. The RuvA-RuvB-RuvC complex processes Holliday junction (HJ) DNA during genetic recombination and DNA repair, while the RuvA-RuvB complex plays an important role in the rescue of blocked DNA replication forks via replication fork reversal (RFR). RuvA specifically binds to HJ cruciform DNA, conferring on it an open structure. The RuvB hexamer acts as an ATP-dependent pump, pulling dsDNA into and through the RuvAB complex. HJ branch migration allows RuvC to scan DNA until it finds its consensus sequence, where it cleaves and resolves the cruciform DNA. This Xylella fastidiosa (strain M23) protein is Holliday junction branch migration complex subunit RuvA.